The following is a 694-amino-acid chain: Polynucleotide 3'-phosphatase ZDP (694 aa).

PARP-type zinc fingers lie at residues 50–132 (VVAE…EQCG) and 165–247 (VIAD…EVNK). The Zn(2+) site is built by cysteine 62, cysteine 65, histidine 93, cysteine 96, cysteine 177, cysteine 180, histidine 208, and cysteine 211. The tract at residues 266 to 331 (AIADNELTEE…SPDSSKVISE (66 aa)) is disordered. A compositionally biased stretch (basic and acidic residues) spans 302–321 (ESKKPASDEISEQKTKDVKN). The span at 322-331 (SPDSSKVISE) shows a compositional bias: polar residues. A PARP-type 3 zinc finger spans residues 328–410 (VISEYAKSSR…ALKELVQQCG (83 aa)). Cysteine 340, cysteine 343, histidine 371, and cysteine 374 together coordinate Zn(2+).

In the C-terminal section; belongs to the DNA 3' phosphatase family. As to quaternary structure, interacts with ROS1 (via the central region). Binds to XRCC1.

The protein localises to the nucleus. The protein resides in the nucleoplasm. The catalysed reaction is a 3'end (2'-deoxyribonucleotide 3'-phosphate)-DNA + H2O = a 3'-end 2'-deoxyribonucleotide-DNA + phosphate. Activated by the presence of DNA. Stimulated by XRCC1. Nick-sensing 3'-phosphoesterase involved in a base excision repair pathway required for active DNA demethylation. The N-terminal DNA-binding domain binds specifically to gap sites and sharply bends the target DNA. Lacks 5'-kinase activity but is capable of 3'-phosphoglycolate end processing. Inactive on 3'-alpha,beta-unsaturated aldehyde (3'-dRP). Protects partially genes from transcriptional silencing by preventing promoter DNA hypermethylation. This chain is Polynucleotide 3'-phosphatase ZDP (ZDP), found in Arabidopsis thaliana (Mouse-ear cress).